The sequence spans 252 residues: MSNHSNAAAVRAFRILEILSAADGPLSLAAIVQAIELPKQTVHRILKQLESTWLVSRTAGNRHYECSSRVRQLAVNVLMQAGPAAARHAILQQLVDKIGETCNLTMLSGDDVVYLDRVETQWPLRMHLQPGSRVPLHCTASGKLLLAFLPSAQRQRLVASLPLRAHSAHTITNAEALHAELAETRQRRLGVNNQENLEGMIAVAVPVMRNRSRACAAIAVQVPMARMTMDQLMGFVPDLRLAADEMVKTFCE.

The HTH iclR-type domain maps to 6 to 68 (NAAAVRAFRI…AGNRHYECSS (63 aa)). Positions 28–47 (LAAIVQAIELPKQTVHRILK) form a DNA-binding region, H-T-H motif. Residues 83 to 252 (PAAARHAILQ…ADEMVKTFCE (170 aa)) enclose the IclR-ED domain.

In terms of biological role, may regulate transcription of the sauSTU operon. In Cupriavidus necator (strain ATCC 17699 / DSM 428 / KCTC 22496 / NCIMB 10442 / H16 / Stanier 337) (Ralstonia eutropha), this protein is Probable transcriptional regulator SauR (sauR).